The following is a 394-amino-acid chain: Protein-glutamate methylesterase/protein-glutamine glutaminase of group 2 operon (394 aa).

One can recognise a Response regulatory domain in the interval 21 to 139; sequence RVMVVDDSAV…ELTGADTFKR (119 aa). Asp-72 is modified (4-aspartylphosphate). Residues 148–201 are disordered; that stretch reads LGAAARRSGPRREGTAAARPPGAAAQPTSGYTLPSPVRAKPETGPLTVRPLPPD. The span at 162–172 shows a compositional bias: low complexity; sequence TAAARPPGAAA. One can recognise a CheB-type methylesterase domain in the interval 200-382; sequence PDGRPDVIAI…SAILPLKEIG (183 aa). Active-site residues include Ser-212, His-238, and Asp-334.

This sequence belongs to the CheB family. Phosphorylated by CheA. Phosphorylation of the N-terminal regulatory domain activates the methylesterase activity.

Its subcellular location is the cytoplasm. The enzyme catalyses [protein]-L-glutamate 5-O-methyl ester + H2O = L-glutamyl-[protein] + methanol + H(+). It catalyses the reaction L-glutaminyl-[protein] + H2O = L-glutamyl-[protein] + NH4(+). Functionally, involved in chemotaxis. Part of a chemotaxis signal transduction system that modulates chemotaxis in response to various stimuli. Catalyzes the demethylation of specific methylglutamate residues introduced into the chemoreceptors (methyl-accepting chemotaxis proteins or MCP) by CheR. Also mediates the irreversible deamidation of specific glutamine residues to glutamic acid. The polypeptide is Protein-glutamate methylesterase/protein-glutamine glutaminase of group 2 operon (Rhodospirillum centenum (strain ATCC 51521 / SW)).